We begin with the raw amino-acid sequence, 700 residues long: Calpain-2 catalytic subunit (700 aa).

Alanine 2 bears the N-acetylalanine mark. Residues 2–19 (AGIAAKLAKDREAAEGLG) constitute a propeptide, anchors to the small subunit. The Calpain catalytic domain maps to 45–344 (LFQDPSFPAI…YSRLEICNLT (300 aa)). Ca(2+)-binding residues include isoleucine 89, glycine 91, and aspartate 96. Cysteine 105 is an active-site residue. Ca(2+)-binding residues include glutamate 175, glutamine 229, and lysine 230. Active-site residues include histidine 262 and asparagine 286. Ca(2+) is bound by residues glutamate 292, aspartate 299, and glutamate 323. Positions 345–514 (PDTLTSDTYK…KKADYQAVDD (170 aa)) are domain III. The segment at 515 to 529 (EIEANLEEFDISEDD) is linker. A domain IV region spans residues 530-700 (IDDGFRRLFA…LISWLCFSVL (171 aa)). Ca(2+) contacts are provided by alanine 542, aspartate 545, glutamate 547, glutamate 552, aspartate 585, aspartate 587, serine 589, lysine 591, glutamate 596, aspartate 615, aspartate 617, serine 619, threonine 621, glutamate 626, aspartate 658, and asparagine 661. 2 consecutive EF-hand domains span residues 572–605 (FSIE…TKIQ) and 602–637 (TKIQ…AGFK). Residues 667–700 (VRLETLFKIFKQLDPENTGTIELDLISWLCFSVL) enclose the EF-hand 3 domain.

It belongs to the peptidase C2 family. As to quaternary structure, forms a heterodimer with a small (regulatory) subunit (CAPNS1). Interacts with CPEB3; this leads to cleavage of CPEB3. Interacts with PIDD1 alternative open reading frame protein altPIDD1. Requires Ca(2+) as cofactor. As to expression, ubiquitous.

The protein resides in the cytoplasm. It localises to the cell membrane. It carries out the reaction Broad endopeptidase specificity.. Activated by 200-1000 micromolar concentrations of calcium and inhibited by calpastatin. Functionally, calcium-regulated non-lysosomal thiol-protease which catalyzes limited proteolysis of substrates involved in cytoskeletal remodeling and signal transduction. Proteolytically cleaves MYOC at 'Arg-226'. Proteolytically cleaves CPEB3 following neuronal stimulation which abolishes CPEB3 translational repressor activity, leading to translation of CPEB3 target mRNAs. The polypeptide is Calpain-2 catalytic subunit (CAPN2) (Homo sapiens (Human)).